A 358-amino-acid chain; its full sequence is L-Ala-D/L-Glu epimerase (358 aa).

Substrate-binding residues include arginine 24, threonine 135, and lysine 160. Lysine 162 functions as the Proton acceptor; specific for (R)-substrate epimerization in the catalytic mechanism. Residues aspartate 190, glutamate 218, and aspartate 243 each contribute to the Mg(2+) site. Lysine 267 serves as the catalytic Proton acceptor; specific for (S)-substrate epimerization. The substrate site is built by cysteine 295, aspartate 320, and aspartate 322.

This sequence belongs to the mandelate racemase/muconate lactonizing enzyme family. Mg(2+) serves as cofactor.

It carries out the reaction L-alanyl-L-glutamate = L-alanyl-D-glutamate. The protein operates within cell wall degradation; peptidoglycan degradation. Catalyzes the epimerization of L-Ala-D-Glu to L-Ala-L-Glu and has probably a role in the metabolism of the murein peptide, of which L-Ala-D-Glu is a component. Is also able to catalyze the epimerization of L-Ala-D-Asp. The protein is L-Ala-D/L-Glu epimerase of Clostridium acetobutylicum (strain ATCC 824 / DSM 792 / JCM 1419 / IAM 19013 / LMG 5710 / NBRC 13948 / NRRL B-527 / VKM B-1787 / 2291 / W).